A 352-amino-acid polypeptide reads, in one-letter code: Histidine biosynthesis bifunctional protein HisB (352 aa).

A histidinol-phosphatase region spans residues 1–164 (MSQKILFIDR…EIENEILSSF (164 aa)). The active-site Nucleophile is the Asp9. Mg(2+) contacts are provided by Asp9 and Asp11. Asp11 serves as the catalytic Proton donor. Zn(2+)-binding residues include Cys93, His95, Cys101, and Cys103. A Mg(2+)-binding site is contributed by Asp130. The imidazoleglycerol-phosphate dehydratase stretch occupies residues 165 to 352 (RSASYQRTTK…ENLASSKGVI (188 aa)).

This sequence in the N-terminal section; belongs to the histidinol-phosphatase family. In the C-terminal section; belongs to the imidazoleglycerol-phosphate dehydratase family. The cofactor is Mg(2+). Requires Zn(2+) as cofactor.

It localises to the cytoplasm. It carries out the reaction D-erythro-1-(imidazol-4-yl)glycerol 3-phosphate = 3-(imidazol-4-yl)-2-oxopropyl phosphate + H2O. It catalyses the reaction L-histidinol phosphate + H2O = L-histidinol + phosphate. It participates in amino-acid biosynthesis; L-histidine biosynthesis; L-histidine from 5-phospho-alpha-D-ribose 1-diphosphate: step 6/9. The protein operates within amino-acid biosynthesis; L-histidine biosynthesis; L-histidine from 5-phospho-alpha-D-ribose 1-diphosphate: step 8/9. The polypeptide is Histidine biosynthesis bifunctional protein HisB (Campylobacter jejuni subsp. doylei (strain ATCC BAA-1458 / RM4099 / 269.97)).